A 416-amino-acid polypeptide reads, in one-letter code: D-amino acid dehydrogenase (416 aa).

Residue 3–17 coordinates FAD; it reads ITILGSGVIGVTTAY.

The protein belongs to the DadA oxidoreductase family. Requires FAD as cofactor.

The catalysed reaction is a D-alpha-amino acid + A + H2O = a 2-oxocarboxylate + AH2 + NH4(+). It functions in the pathway amino-acid degradation; D-alanine degradation; NH(3) and pyruvate from D-alanine: step 1/1. Functionally, oxidative deamination of D-amino acids. The sequence is that of D-amino acid dehydrogenase from Brucella canis (strain ATCC 23365 / NCTC 10854 / RM-666).